Reading from the N-terminus, the 284-residue chain is Protein-S-isoprenylcysteine O-methyltransferase (284 aa).

The Cytoplasmic segment spans residues 1–16 (MAGCAARAPPGSEARL). Residues 17–33 (SLATFLLGASVLALPLL) traverse the membrane as a helical segment. The Lumenal portion of the chain corresponds to 34-41 (TRAGLQGR). Residues 42–59 (TGLALYVAGLNALLLLLY) form a helical membrane-spanning segment. At 60 to 69 (RPPRYQIAIR) the chain is on the cytoplasmic side. The helical transmembrane segment at 70 to 87 (ACFLGFVFGCGTLLSFSQ) threads the bilayer. Over 88–92 (SSWSH) the chain is Lumenal. Residues 93–112 (FGWYMCSLSLFHYSEYLVTA) form a helical membrane-spanning segment. The Cytoplasmic segment spans residues 113–131 (VNNPKSLSLDSFLLNHSLE). A helical transmembrane segment spans residues 132–149 (YTVAALSSWLEFTLENIF). The Lumenal segment spans residues 150–154 (WPELK). A helical transmembrane segment spans residues 155 to 174 (QITWLSVTGLLMVVFGECLR). The Cytoplasmic segment spans residues 175–212 (KAAMFTAGSNFNHVVQNEKSDTHTLVTSGVYAWFRHPS). S-adenosyl-L-methionine-binding positions include Gln190, 197–200 (HTLV), Tyr205, and 210–213 (HPSY). The chain crosses the membrane as a helical span at residues 213–228 (YVGWFYWSIGTQVMLC). Residue Asn229 is a topological domain, lumenal. A helical transmembrane segment spans residues 230–244 (PICGVSYALTVWRFF). Residues 245 to 284 (RDRTEEEEISLIHFFGEEYLEYKKRVPTGLPFIKGVKVDL) lie on the Cytoplasmic side of the membrane. Arg247 provides a ligand contact to substrate. An S-adenosyl-L-methionine-binding site is contributed by Glu251.

The protein belongs to the class VI-like SAM-binding methyltransferase superfamily. Isoprenylcysteine carboxyl methyltransferase family. As to expression, ubiquitously expressed. Expressed at higher levels in the cerebellum and putamen than in other brain regions. Abundant expression seen in the Purkinje cells and pontine neurons.

It is found in the endoplasmic reticulum membrane. The catalysed reaction is [protein]-C-terminal S-[(2E,6E)-farnesyl]-L-cysteine + S-adenosyl-L-methionine = [protein]-C-terminal S-[(2E,6E)-farnesyl]-L-cysteine methyl ester + S-adenosyl-L-homocysteine. With respect to regulation, competitively inhibited by N-acetyl-S-trans,trans-farnesyl-l-cysteine (AFC). Its function is as follows. Catalyzes the post-translational methylation of isoprenylated C-terminal cysteine residues. This chain is Protein-S-isoprenylcysteine O-methyltransferase (ICMT), found in Homo sapiens (Human).